The following is a 292-amino-acid chain: Acetyl-coenzyme A carboxylase carboxyl transferase subunit beta (292 aa).

Residues L29–N292 form the CoA carboxyltransferase N-terminal domain. 4 residues coordinate Zn(2+): C33, C36, C52, and C55. The C4-type zinc-finger motif lies at C33–C55.

This sequence belongs to the AccD/PCCB family. As to quaternary structure, acetyl-CoA carboxylase is a heterohexamer composed of biotin carboxyl carrier protein (AccB), biotin carboxylase (AccC) and two subunits each of ACCase subunit alpha (AccA) and ACCase subunit beta (AccD). The cofactor is Zn(2+).

Its subcellular location is the cytoplasm. It catalyses the reaction N(6)-carboxybiotinyl-L-lysyl-[protein] + acetyl-CoA = N(6)-biotinyl-L-lysyl-[protein] + malonyl-CoA. It participates in lipid metabolism; malonyl-CoA biosynthesis; malonyl-CoA from acetyl-CoA: step 1/1. Component of the acetyl coenzyme A carboxylase (ACC) complex. Biotin carboxylase (BC) catalyzes the carboxylation of biotin on its carrier protein (BCCP) and then the CO(2) group is transferred by the transcarboxylase to acetyl-CoA to form malonyl-CoA. This Prochlorococcus marinus (strain MIT 9515) protein is Acetyl-coenzyme A carboxylase carboxyl transferase subunit beta.